We begin with the raw amino-acid sequence, 564 residues long: Formate--tetrahydrofolate ligase (564 aa).

65-72 (TPLGEGKT) contacts ATP.

It belongs to the formate--tetrahydrofolate ligase family.

It catalyses the reaction (6S)-5,6,7,8-tetrahydrofolate + formate + ATP = (6R)-10-formyltetrahydrofolate + ADP + phosphate. The protein operates within one-carbon metabolism; tetrahydrofolate interconversion. In Roseiflexus sp. (strain RS-1), this protein is Formate--tetrahydrofolate ligase.